We begin with the raw amino-acid sequence, 503 residues long: Lysine--tRNA ligase (503 aa).

Mg(2+) is bound by residues glutamate 410 and glutamate 417.

Belongs to the class-II aminoacyl-tRNA synthetase family. As to quaternary structure, homodimer. Mg(2+) is required as a cofactor.

It localises to the cytoplasm. The catalysed reaction is tRNA(Lys) + L-lysine + ATP = L-lysyl-tRNA(Lys) + AMP + diphosphate. The sequence is that of Lysine--tRNA ligase from Prochlorococcus marinus (strain MIT 9211).